The sequence spans 489 residues: Serine/arginine-rich splicing factor 4 (489 aa).

In terms of domain architecture, RRM 1 spans 2-72; that stretch reads PRVYIGRLSY…ERVIVEHARG (71 aa). Disordered regions lie at residues 72–95 and 169–489; these read GPRRDGSYGSGRSGYGYRRSGRDK and KIRL…HSRS. Serine 78 and serine 84 each carry phosphoserine. One can recognise an RRM 2 domain in the interval 104-177; the sequence is YRLIVENLSS…RKIRLVEDKP (74 aa). Composition is skewed to basic residues over residues 179-206 and 214-246; these read SRRRRSYSRSRSHSRSRSRSRHSRKSRS and SHSKSRSRSRSGSHSRSKSRSRSQSRSRSKKEK. Basic and acidic residues predominate over residues 247–279; the sequence is SRSPSKDNKSRSRSRSPDKSRSKSKDHAEDKLQ. Phosphoserine occurs at positions 289, 291, and 293. Basic and acidic residues predominate over residues 293-332; sequence SRHDSKSRSRSQERRAEEERRRSVSRARSQEKSRSQEKSL. Positions 333–356 are enriched in basic residues; sequence LKSRSRSRSRSRSRSKDKRKGRKR. Basic and acidic residues-rich tracts occupy residues 357 to 370 and 394 to 426; these read SRDESRSRSRSKSE and KDTDHSRSPSRSVSKEREHAKAESGQRGSRAEG. Serine 441, serine 453, and serine 455 each carry phosphoserine. 2 stretches are compositionally biased toward basic residues: residues 456-469 and 479-489; these read RSKSASKTRSRSKS and SRSRSRSHSRS.

This sequence belongs to the splicing factor SR family. Found in a pre-mRNA splicing complex with SRSF4/SFRS4, SRSF5/SFRS5, SNRNP70, SNRPA1, SRRM1 and SRRM2. Interacts with PNN. In terms of processing, extensively phosphorylated on serine residues in the RS domain.

Its subcellular location is the nucleus speckle. Functionally, plays a role in alternative splice site selection during pre-mRNA splicing. Represses the splicing of MAPT/Tau exon 10. The polypeptide is Serine/arginine-rich splicing factor 4 (Srsf4) (Mus musculus (Mouse)).